The primary structure comprises 153 residues: Small ribosomal subunit protein bS16 (153 aa).

A disordered region spans residues 130–153 (EAEAAAAAEEAPAEEAAEEAPAEA). Over residues 140-153 (APAEEAAEEAPAEA) the composition is skewed to acidic residues.

It belongs to the bacterial ribosomal protein bS16 family.

The protein is Small ribosomal subunit protein bS16 of Bifidobacterium longum (strain NCC 2705).